We begin with the raw amino-acid sequence, 703 residues long: Polyribonucleotide nucleotidyltransferase (703 aa).

2 residues coordinate Mg(2+): Asp488 and Asp494. Residues 555–614 (PKIVKMQINPDKIKDVIGPGGKIITKIIDETGVKIDIEQTGEVFISGIEIDMIKKAQELI) enclose the KH domain. Positions 624–692 (GKTYKGKVSR…EKGRVNLSRK (69 aa)) constitute an S1 motif domain.

This sequence belongs to the polyribonucleotide nucleotidyltransferase family. The cofactor is Mg(2+).

It localises to the cytoplasm. The catalysed reaction is RNA(n+1) + phosphate = RNA(n) + a ribonucleoside 5'-diphosphate. Involved in mRNA degradation. Catalyzes the phosphorolysis of single-stranded polyribonucleotides processively in the 3'- to 5'-direction. The protein is Polyribonucleotide nucleotidyltransferase of Clostridioides difficile (strain 630) (Peptoclostridium difficile).